A 481-amino-acid chain; its full sequence is Hyaluronidase-4 (481 aa).

Over 1–11 (MQLLPEGQLRL) the chain is Cytoplasmic. A helical membrane pass occupies residues 12–32 (CVFQPVHLTSGLLILFILKSI). The Extracellular portion of the chain corresponds to 33–455 (SSLKPARLPV…CREMTEASGP (423 aa)). Intrachain disulfides connect C59–C351, C223–C237, C376–C387, C381–C435, and C437–C446. N-linked (GlcNAc...) asparagine glycosylation is found at N64 and N115. E147 acts as the Proton donor in catalysis. N-linked (GlcNAc...) asparagine glycosylation is found at N232 and N343. Residues 456–476 (SGLSLSSSSVITLCLLVLAGY) form a helical membrane-spanning segment. Topologically, residues 477–481 (QSIQL) are cytoplasmic.

This sequence belongs to the glycosyl hydrolase 56 family.

It localises to the membrane. The enzyme catalyses Random hydrolysis of (1-&gt;4)-linkages between N-acetyl-beta-D-glucosamine and D-glucuronate residues in hyaluronate.. Functionally, endo-hyaluronidase that degrades hyaluronan to smaller oligosaccharide fragments. Also has chondroitin sulfate hydrolase activity, The best substrate being the galactosaminidic linkage in the sequence of a trisulfated tetrasaccharide. The chain is Hyaluronidase-4 (Hyal4) from Mus musculus (Mouse).